Reading from the N-terminus, the 81-residue chain is Cytochrome b559 subunit alpha (81 aa).

Residues 21–35 (VIHSITIPMLFIAGW) traverse the membrane as a helical segment. H23 provides a ligand contact to heme.

The protein belongs to the PsbE/PsbF family. Heterodimer of an alpha subunit and a beta subunit. PSII is composed of 1 copy each of membrane proteins PsbA, PsbB, PsbC, PsbD, PsbE, PsbF, PsbH, PsbI, PsbJ, PsbK, PsbL, PsbM, PsbT, PsbX, PsbY, PsbZ, Psb30/Ycf12, peripheral proteins PsbO, CyanoQ (PsbQ), PsbU, PsbV and a large number of cofactors. It forms dimeric complexes. The cofactor is heme b.

It is found in the cellular thylakoid membrane. Its function is as follows. This b-type cytochrome is tightly associated with the reaction center of photosystem II (PSII). PSII is a light-driven water:plastoquinone oxidoreductase that uses light energy to abstract electrons from H(2)O, generating O(2) and a proton gradient subsequently used for ATP formation. It consists of a core antenna complex that captures photons, and an electron transfer chain that converts photonic excitation into a charge separation. In Picosynechococcus sp. (strain ATCC 27264 / PCC 7002 / PR-6) (Agmenellum quadruplicatum), this protein is Cytochrome b559 subunit alpha.